We begin with the raw amino-acid sequence, 363 residues long: Probable aminomethyltransferase (363 aa).

It belongs to the GcvT family. As to quaternary structure, the glycine cleavage system is composed of four proteins: P, T, L and H.

The catalysed reaction is N(6)-[(R)-S(8)-aminomethyldihydrolipoyl]-L-lysyl-[protein] + (6S)-5,6,7,8-tetrahydrofolate = N(6)-[(R)-dihydrolipoyl]-L-lysyl-[protein] + (6R)-5,10-methylene-5,6,7,8-tetrahydrofolate + NH4(+). Its function is as follows. The glycine cleavage system catalyzes the degradation of glycine. This is Probable aminomethyltransferase from Haloarcula marismortui (strain ATCC 43049 / DSM 3752 / JCM 8966 / VKM B-1809) (Halobacterium marismortui).